The following is a 457-amino-acid chain: Cell division protein FtsA (457 aa).

It belongs to the FtsA/MreB family. In terms of assembly, self-interacts. Interacts with FtsZ.

It localises to the cell membrane. In terms of biological role, cell division protein that is involved in the assembly of the Z ring. May serve as a membrane anchor for the Z ring. Increased expression restores growth to a PBP2b (penA) deletion strain as well as mreCD and rodA deletions, but not gpsB or rodZ deletions. Does not restore wild-type cell morphology to the penA deletion. In Streptococcus pneumoniae serotype 2 (strain D39 / NCTC 7466), this protein is Cell division protein FtsA.